A 274-amino-acid chain; its full sequence is Transcriptional activator PerA (274 aa).

An HTH araC/xylS-type domain is found at 168 to 265 (DRVIKVIELD…NTTPKKYNGV (98 aa)). DNA-binding regions (H-T-H motif) lie at residues 185–206 (GDVS…NKEN) and 232–255 (IDEI…KEYY).

Functionally, could help in the transcriptional activator of eaeA expression in enteropathogenic E.coli. However, it seems that it is PerC which acts as an activator. In Escherichia coli O127:H6 (strain E2348/69 / EPEC), this protein is Transcriptional activator PerA (perA).